Here is a 114-residue protein sequence, read N- to C-terminus: Non-specific lipid-transfer protein 2 (114 aa).

The N-terminal stretch at 1-23 is a signal peptide; that stretch reads MEMVNKIACFVLLCMVVVAPHAE. Cystine bridges form between Cys27-Cys73, Cys37-Cys50, Cys51-Cys96, and Cys71-Cys110.

The protein belongs to the plant LTP family.

Functionally, plant non-specific lipid-transfer proteins transfer phospholipids as well as galactolipids across membranes. May play a role in wax or cutin deposition in the cell walls of expanding epidermal cells and certain secretory tissues. The sequence is that of Non-specific lipid-transfer protein 2 (LTP2) from Solanum pennellii (Tomato).